A 310-amino-acid polypeptide reads, in one-letter code: Zinc finger CCCH domain-containing protein 14 (310 aa).

A disordered region spans residues 56–75 (ESLSPSPPSSSSPPSRVDTT). Residues 84 to 129 (KLILEYDELNEHYELCLNRLQSLMTELDSLRHENDSLRFENSDLLK) are a coiled coil. Over residues 155-167 (QISDSRSAKRNNQ) the composition is skewed to basic and acidic residues. A disordered region spans residues 155–174 (QISDSRSAKRNNQERNSLPK). 2 C3H1-type zinc fingers span residues 232–260 (MMKT…HGID) and 270–298 (RYKT…HSLT).

In terms of tissue distribution, highly expressed in secondary cell wall-forming tissues and the xylem cells of roots. Expressed predominantly in inflorescence stems, flowers and siliques. Highly expressed in the basal portion of stems, where cells are undergoing secondary cell wall thickening.

In terms of biological role, functions probably as a transcriptional factor that activates genes involved in secondary cell wall biosynthesis. May play a role in both transcriptional and post-transcriptional regulation. Binds to ssDNA, dsDNA, and ribohomopolymers in vitro. Maybe involved in post-transcriptional regulation of its target genes. Targets RNA of a polygalacturonase, a well-known cell wall modifying gene. Functions redudantly with C3H15 to regulate secondary cell wall formation. C3H14 and C3H15 have overlapping roles in the regulation of secondary cell wall formation and anther development. C3H14 may contribute more to secondary cell wall thickening while C3H15 could be more important in anther development. May regulate at both the transcriptional and post-transcriptional levels the expression of many genes involved in various biological processes, particularly those associated with cell wall metabolism and pollen development. The protein is Zinc finger CCCH domain-containing protein 14 of Arabidopsis thaliana (Mouse-ear cress).